A 455-amino-acid polypeptide reads, in one-letter code: Transcriptional regulatory protein FlbD (455 aa).

Residues 2 to 114 enclose the Response regulatory domain; the sequence is RLLVVGKLNG…LIAAVLAAVT (113 aa). Positions 120–349 constitute a Sigma-54 factor interaction domain; the sequence is MVVRDPAMEQ…LENAMHRAVL (230 aa). Residues 148-155 and 211-220 contribute to the ATP site; these read GESGSGKE and ADGGTLLLDE. Residues 416–435 constitute a DNA-binding region (H-T-H motif); that stretch reads RTHAANILGISIRTLRNKLK.

Its subcellular location is the cytoplasm. Activation of sigma-54-dependent flagellar gene promoters and strong negative autoregulatory effects on its own promoter. The synthesis and function of FlbD in C.crescentus is controlled by an internal cell-cycle clock. This chain is Transcriptional regulatory protein FlbD (flbD), found in Caulobacter vibrioides (strain ATCC 19089 / CIP 103742 / CB 15) (Caulobacter crescentus).